The chain runs to 499 residues: Glutamyl-tRNA(Gln) amidotransferase subunit A (499 aa).

Active-site charge relay system residues include Lys-75 and Ser-150. Ser-174 serves as the catalytic Acyl-ester intermediate.

It belongs to the amidase family. GatA subfamily. In terms of assembly, heterotrimer of A, B and C subunits.

The enzyme catalyses L-glutamyl-tRNA(Gln) + L-glutamine + ATP + H2O = L-glutaminyl-tRNA(Gln) + L-glutamate + ADP + phosphate + H(+). Allows the formation of correctly charged Gln-tRNA(Gln) through the transamidation of misacylated Glu-tRNA(Gln) in organisms which lack glutaminyl-tRNA synthetase. The reaction takes place in the presence of glutamine and ATP through an activated gamma-phospho-Glu-tRNA(Gln). This Ralstonia pickettii (strain 12J) protein is Glutamyl-tRNA(Gln) amidotransferase subunit A.